A 202-amino-acid polypeptide reads, in one-letter code: LexA repressor (202 aa).

The H-T-H motif DNA-binding region spans 28 to 48 (RAEIAQRLGFRSPNAAEEHLK). Active-site for autocatalytic cleavage activity residues include Ser-119 and Lys-156.

This sequence belongs to the peptidase S24 family. In terms of assembly, homodimer.

It carries out the reaction Hydrolysis of Ala-|-Gly bond in repressor LexA.. Represses a number of genes involved in the response to DNA damage (SOS response), including recA and lexA. Binds to the 16 bp palindromic sequence 5'-CTGTATATATATACAG-3'. In the presence of single-stranded DNA, RecA interacts with LexA causing an autocatalytic cleavage which disrupts the DNA-binding part of LexA, leading to derepression of the SOS regulon and eventually DNA repair. This is LexA repressor from Citrobacter koseri (strain ATCC BAA-895 / CDC 4225-83 / SGSC4696).